The primary structure comprises 317 residues: Apolipoprotein E (317 aa).

An N-terminal signal peptide occupies residues 1–18; sequence MKVLWAALLVTFLAGCQA. A run of 8 repeats spans residues 80 to 101, 102 to 123, 124 to 145, 146 to 167, 168 to 189, 190 to 211, 212 to 233, and 234 to 255. Positions 80-255 are 8 X 22 AA approximate tandem repeats; that stretch reads ALMDETMKEL…RLDEVKEQVA (176 aa). At Met-143 the chain carries Methionine sulfoxide. Ser-147 is subject to Phosphoserine. The segment at 158–168 is LDL and other lipoprotein receptors binding; that stretch reads HLRKLRKRLLR. A heparin-binding site is contributed by 162-165; it reads LRKR. A lipid-binding and lipoprotein association region spans residues 210 to 290; sequence AATVGSLAGQ…SWFEPLVEDM (81 aa). 229–236 serves as a coordination point for heparin; sequence GERLRARM. The interval 266 to 317 is homooligomerization; that stretch reads QQIRLQAEAFQARLKSWFEPLVEDMQRQWAGLVEKVQAAVGTSAAPVPSDNH. The specificity for association with VLDL stretch occupies residues 278-290; that stretch reads RLKSWFEPLVEDM.

It belongs to the apolipoprotein A1/A4/E family. As to quaternary structure, homotetramer. May interact with ABCA1; functionally associated with ABCA1 in the biogenesis of HDLs. May interact with APP/A4 amyloid-beta peptide; the interaction is extremely stable in vitro but its physiological significance is unclear. May interact with MAPT. May interact with MAP2. In the cerebrospinal fluid, interacts with secreted SORL1. Interacts with PMEL; this allows the loading of PMEL luminal fragment on ILVs to induce fibril nucleation. In terms of processing, APOE exists as multiple glycosylated and sialylated glycoforms within cells and in plasma. The extent of glycosylation and sialylation are tissue and context specific. Glycated in plasma VLDL. Post-translationally, phosphorylated by FAM20C in the extracellular medium.

It is found in the secreted. Its subcellular location is the extracellular space. The protein localises to the extracellular matrix. It localises to the extracellular vesicle. The protein resides in the endosome. It is found in the multivesicular body. APOE is an apolipoprotein, a protein associating with lipid particles, that mainly functions in lipoprotein-mediated lipid transport between organs via the plasma and interstitial fluids. APOE is a core component of plasma lipoproteins and is involved in their production, conversion and clearance. Apolipoproteins are amphipathic molecules that interact both with lipids of the lipoprotein particle core and the aqueous environment of the plasma. As such, APOE associates with chylomicrons, chylomicron remnants, very low density lipoproteins (VLDL) and intermediate density lipoproteins (IDL) but shows a preferential binding to high-density lipoproteins (HDL). It also binds a wide range of cellular receptors including the LDL receptor/LDLR, the LDL receptor-related proteins LRP1, LRP2 and LRP8 and the very low-density lipoprotein receptor/VLDLR that mediate the cellular uptake of the APOE-containing lipoprotein particles. Finally, APOE also has a heparin-binding activity and binds heparan-sulfate proteoglycans on the surface of cells, a property that supports the capture and the receptor-mediated uptake of APOE-containing lipoproteins by cells. A main function of APOE is to mediate lipoprotein clearance through the uptake of chylomicrons, VLDLs, and HDLs by hepatocytes. APOE is also involved in the biosynthesis by the liver of VLDLs as well as their uptake by peripheral tissues ensuring the delivery of triglycerides and energy storage in muscle, heart and adipose tissues. By participating in the lipoprotein-mediated distribution of lipids among tissues, APOE plays a critical role in plasma and tissues lipid homeostasis. APOE is also involved in two steps of reverse cholesterol transport, the HDLs-mediated transport of cholesterol from peripheral tissues to the liver, and thereby plays an important role in cholesterol homeostasis. First, it is functionally associated with ABCA1 in the biogenesis of HDLs in tissues. Second, it is enriched in circulating HDLs and mediates their uptake by hepatocytes. APOE also plays an important role in lipid transport in the central nervous system, regulating neuron survival and sprouting. In Hylobates lar (Lar gibbon), this protein is Apolipoprotein E (APOE).